Here is a 529-residue protein sequence, read N- to C-terminus: Peptide chain release factor 3 (529 aa).

Positions 11–280 constitute a tr-type G domain; that stretch reads AKRRTFAIIS…GLVEWAPAPM (270 aa). Residues 20–27, 88–92, and 142–145 each bind GTP; these read SHPDAGKT, DTPGH, and NKLD.

It belongs to the TRAFAC class translation factor GTPase superfamily. Classic translation factor GTPase family. PrfC subfamily.

It is found in the cytoplasm. Increases the formation of ribosomal termination complexes and stimulates activities of RF-1 and RF-2. It binds guanine nucleotides and has strong preference for UGA stop codons. It may interact directly with the ribosome. The stimulation of RF-1 and RF-2 is significantly reduced by GTP and GDP, but not by GMP. The protein is Peptide chain release factor 3 of Yersinia enterocolitica serotype O:8 / biotype 1B (strain NCTC 13174 / 8081).